We begin with the raw amino-acid sequence, 53 residues long: uncharacterized protein (53 aa).

Positions 1–19 (MKLLTILILFYSFFMNLQA) are cleaved as a signal peptide.

This is an uncharacterized protein from Autographa californica nuclear polyhedrosis virus (AcMNPV).